Consider the following 388-residue polypeptide: LL-diaminopimelate aminotransferase (388 aa).

Substrate is bound by residues Tyr15 and Gly40. Pyridoxal 5'-phosphate contacts are provided by residues Tyr69, 103 to 104, Tyr128, Asn178, Tyr209, and 237 to 239; these read SK and SLS. 3 residues coordinate substrate: Lys104, Tyr128, and Asn178. Lys240 is modified (N6-(pyridoxal phosphate)lysine). Arg248 is a binding site for pyridoxal 5'-phosphate. Substrate is bound at residue Arg366.

It belongs to the class-I pyridoxal-phosphate-dependent aminotransferase family. LL-diaminopimelate aminotransferase subfamily. In terms of assembly, homodimer. It depends on pyridoxal 5'-phosphate as a cofactor.

The enzyme catalyses (2S,6S)-2,6-diaminopimelate + 2-oxoglutarate = (S)-2,3,4,5-tetrahydrodipicolinate + L-glutamate + H2O + H(+). The protein operates within amino-acid biosynthesis; L-lysine biosynthesis via DAP pathway; LL-2,6-diaminopimelate from (S)-tetrahydrodipicolinate (aminotransferase route): step 1/1. Its function is as follows. Involved in the synthesis of meso-diaminopimelate (m-DAP or DL-DAP), required for both lysine and peptidoglycan biosynthesis. Catalyzes the direct conversion of tetrahydrodipicolinate to LL-diaminopimelate. Can also use m-DAP instead of LL-DAP as the amino-group donor. The sequence is that of LL-diaminopimelate aminotransferase from Syntrophobacter fumaroxidans (strain DSM 10017 / MPOB).